Consider the following 152-residue polypeptide: Phospholipase A2 (152 aa).

The first 20 residues, 1 to 20 (MAACHRILLLLSVAVASGAA), serve as a signal peptide directing secretion. Intrachain disulfides connect C39/C96, C53/C142, C55/C70, C69/C124, C75/C149, C76/C117, C85/C110, and C103/C115. Residues G56 and G58 each contribute to the Ca(2+) site. H73 is a catalytic residue. D74 lines the Ca(2+) pocket. D118 is a catalytic residue.

It belongs to the phospholipase A2 family. Expressed by the venom gland. Heavily expressed in the venom gland transcriptome.

Its subcellular location is the secreted. It catalyses the reaction a 1,2-diacyl-sn-glycero-3-phosphocholine + H2O = a 1-acyl-sn-glycero-3-phosphocholine + a fatty acid + H(+). Its function is as follows. PA2 catalyzes the calcium-dependent hydrolysis of the 2-acyl groups in 3-sn-phosphoglycerides. This Meiacanthus atrodorsalis (Forktail blenny) protein is Phospholipase A2.